Consider the following 944-residue polypeptide: Tyrosine-protein kinase transmembrane receptor ROR2 (944 aa).

Positions 1 to 33 (MARGWVRPSRVPLCARAVWTAAALLLWTPWTAG) are cleaved as a signal peptide. Residues 34-403 (EVEDSEAIDT…CSPRDGSKMG (370 aa)) are Extracellular-facing. The Ig-like C2-type domain maps to 55–145 (PTLKGYFLNF…VATNGLKTIT (91 aa)). N-linked (GlcNAc...) asparagine glycosylation is present at Asn70. Cystine bridges form between Cys83/Cys135, Cys174/Cys239, Cys182/Cys232, Cys223/Cys264, Cys252/Cys300, Cys256/Cys286, Cys316/Cys394, Cys337/Cys377, and Cys365/Cys389. Positions 169 to 303 (QEDGFCQPYR…SPDAANCMRI (135 aa)) constitute an FZ domain. Asn188 is a glycosylation site (N-linked (GlcNAc...) asparagine). Residues 316–394 (CYNGSGADYR…RVELCDVPPC (79 aa)) form the Kringle domain. The N-linked (GlcNAc...) asparagine glycan is linked to Asn318. The chain crosses the membrane as a helical span at residues 404–424 (ILYILVPSIAIPLVIACLFFL). The Cytoplasmic portion of the chain corresponds to 425 to 944 (VCMCRNKQKA…TEAAHVQLEA (520 aa)). Residues 473-746 (VRFMEELGED…PRFKDIHSRL (274 aa)) enclose the Protein kinase domain. ATP contacts are provided by residues 479-487 (LGEDRFGKV) and Lys507. The active-site Proton acceptor is Asp615. Tyr646 bears the Phosphotyrosine; by autocatalysis mark. Positions 757–779 (SSAQTSGASNTTQTSSLSTSPVS) are disordered. Positions 765–779 (SNTTQTSSLSTSPVS) are enriched in low complexity. The residue at position 785 (Arg785) is an Asymmetric dimethylarginine. Disordered stretches follow at residues 850–879 (QVPP…TAPS) and 898–929 (QNIA…LGDN). Low complexity predominate over residues 857-872 (PKPSSHHSGSGSTSTG).

The protein belongs to the protein kinase superfamily. Tyr protein kinase family. ROR subfamily. As to quaternary structure, homodimer; promotes osteogenesis. Binds YWHAB. Interacts with WTIP. Interacts with ROR2. Mg(2+) is required as a cofactor.

It is found in the cell membrane. The catalysed reaction is L-tyrosyl-[protein] + ATP = O-phospho-L-tyrosyl-[protein] + ADP + H(+). In terms of biological role, tyrosine-protein kinase receptor which may be involved in the early formation of the chondrocytes. It seems to be required for cartilage and growth plate development. Phosphorylates YWHAB, leading to induction of osteogenesis and bone formation. In contrast, has also been shown to have very little tyrosine kinase activity in vitro. May act as a receptor for wnt ligand WNT5A which may result in the inhibition of WNT3A-mediated signaling. This chain is Tyrosine-protein kinase transmembrane receptor ROR2 (Ror2), found in Mus musculus (Mouse).